The sequence spans 185 residues: Guanylate kinase (185 aa).

Residues 3–181 enclose the Guanylate kinase-like domain; that stretch reads TRMIIVAAPS…SYGEFKKIVE (179 aa). 10 to 17 contributes to the ATP binding site; that stretch reads APSGAGKS.

This sequence belongs to the guanylate kinase family.

It is found in the cytoplasm. The enzyme catalyses GMP + ATP = GDP + ADP. In terms of biological role, essential for recycling GMP and indirectly, cGMP. The chain is Guanylate kinase from Bdellovibrio bacteriovorus (strain ATCC 15356 / DSM 50701 / NCIMB 9529 / HD100).